The primary structure comprises 189 residues: Putative 3-methyladenine DNA glycosylase (189 aa).

Belongs to the DNA glycosylase MPG family.

The protein is Putative 3-methyladenine DNA glycosylase (mag) of Corynebacterium glutamicum (strain ATCC 13032 / DSM 20300 / JCM 1318 / BCRC 11384 / CCUG 27702 / LMG 3730 / NBRC 12168 / NCIMB 10025 / NRRL B-2784 / 534).